Here is a 527-residue protein sequence, read N- to C-terminus: Type II methyltransferase M.XamI (527 aa).

It belongs to the N(4)/N(6)-methyltransferase family.

The enzyme catalyses a 2'-deoxyadenosine in DNA + S-adenosyl-L-methionine = an N(6)-methyl-2'-deoxyadenosine in DNA + S-adenosyl-L-homocysteine + H(+). Its function is as follows. A gamma subtype methylase that recognizes the double-stranded sequence 5'-GTCGAC-3', possibly methylates A-5 on both strands, and protects the DNA from cleavage by the XamI endonuclease. The protein is Type II methyltransferase M.XamI of Xanthomonas campestris pv. amaranthicola.